Reading from the N-terminus, the 339-residue chain is Dihydroorotate dehydrogenase (quinone) (339 aa).

FMN-binding positions include 64-68 (AGADK) and threonine 88. Position 68 (lysine 68) interacts with substrate. 113–117 (NRNGF) is a binding site for substrate. Asparagine 141 and asparagine 174 together coordinate FMN. Asparagine 174 provides a ligand contact to substrate. Serine 177 acts as the Nucleophile in catalysis. Asparagine 179 is a substrate binding site. FMN is bound by residues lysine 219 and threonine 247. 248 to 249 (NT) lines the substrate pocket. FMN contacts are provided by residues glycine 270, glycine 299, and 320–321 (YS).

Belongs to the dihydroorotate dehydrogenase family. Type 2 subfamily. As to quaternary structure, monomer. It depends on FMN as a cofactor.

It is found in the cell membrane. The enzyme catalyses (S)-dihydroorotate + a quinone = orotate + a quinol. The protein operates within pyrimidine metabolism; UMP biosynthesis via de novo pathway; orotate from (S)-dihydroorotate (quinone route): step 1/1. Catalyzes the conversion of dihydroorotate to orotate with quinone as electron acceptor. This is Dihydroorotate dehydrogenase (quinone) (pyrD) from Haemophilus influenzae (strain ATCC 51907 / DSM 11121 / KW20 / Rd).